We begin with the raw amino-acid sequence, 197 residues long: GTP cyclohydrolase-2 (197 aa).

50-54 contributes to the GTP binding site; sequence RIHSE. Zn(2+) is bound by residues C55, C66, and C68. Residues Q71, 93-95, and T115 contribute to the GTP site; that span reads EGR. The active-site Proton acceptor is the D127. The Nucleophile role is filled by R129. Residues T150 and K155 each coordinate GTP.

Belongs to the GTP cyclohydrolase II family. The cofactor is Zn(2+).

It carries out the reaction GTP + 4 H2O = 2,5-diamino-6-hydroxy-4-(5-phosphoribosylamino)-pyrimidine + formate + 2 phosphate + 3 H(+). Its pathway is cofactor biosynthesis; riboflavin biosynthesis; 5-amino-6-(D-ribitylamino)uracil from GTP: step 1/4. Its function is as follows. Catalyzes the conversion of GTP to 2,5-diamino-6-ribosylamino-4(3H)-pyrimidinone 5'-phosphate (DARP), formate and pyrophosphate. The chain is GTP cyclohydrolase-2 from Neisseria gonorrhoeae (strain ATCC 700825 / FA 1090).